A 334-amino-acid polypeptide reads, in one-letter code: MEKDALEVRLKSIRHSLDKNTKLLPGKYRNTLGERLITKWRYKKKSHNGSSMLPEKCKSHVQLYDDLVQESSKHFVGFRLHDLRALLKRICSIQNYTRHVLIEWDVRWVNPLTLASKGWEPYQSASQSQVPFKCCCCHAIMTIPLLKNGDDVADYTMKLNEKIWNSNIIGNHLQKCPWRENQVDLNKEYYLSSQNLIREIERIHTEIDRIVSGSNEFSLKRNSSRIFHYLSEKEIQKLAFFFDCKDYSLVGLLLLGYTKFQKDDLVQCTACFHRASLKKLEYTEFNGHALWCRYYNKELLPTMLLELIGKEDKLITKLGVGERLNKLEAVLQTL.

Interacts with MLP1 and MLP2.

It is found in the nucleus membrane. In terms of biological role, involved in the nuclear retention of improperly spliced pre-mRNAs. This is Pre-mRNA leakage protein 39 (PML39) from Saccharomyces cerevisiae (strain ATCC 204508 / S288c) (Baker's yeast).